The following is a 124-amino-acid chain: Large ribosomal subunit protein bL20 (124 aa).

Belongs to the bacterial ribosomal protein bL20 family.

Functionally, binds directly to 23S ribosomal RNA and is necessary for the in vitro assembly process of the 50S ribosomal subunit. It is not involved in the protein synthesizing functions of that subunit. This is Large ribosomal subunit protein bL20 from Gemmatimonas aurantiaca (strain DSM 14586 / JCM 11422 / NBRC 100505 / T-27).